Consider the following 352-residue polypeptide: Protein Wnt-3a (352 aa).

The signal sequence occupies residues 1–18; sequence MAPLGYLLVLCSLKQALG. 11 disulfide bridges follow: Cys-77–Cys-88, Cys-128–Cys-136, Cys-138–Cys-155, Cys-203–Cys-217, Cys-205–Cys-212, Cys-281–Cys-312, Cys-297–Cys-307, Cys-311–Cys-351, Cys-327–Cys-342, Cys-329–Cys-339, and Cys-334–Cys-335. N-linked (GlcNAc...) asparagine glycosylation occurs at Asn-87. Ser-209 carries O-palmitoleoyl serine; by PORCN lipidation. The N-linked (GlcNAc...) asparagine glycan is linked to Asn-298.

The protein belongs to the Wnt family. In terms of assembly, forms a soluble 1:1 complex with AFM; this prevents oligomerization and is required for prolonged biological activity. The complex with AFM may represent the physiological form in body fluids. Homooligomer; disulfide-linked, leading to inactivation. Interacts with APCDD1 and WLS. Component of the Wnt-Fzd-LRP5-LRP6 signaling complex that contains a WNT protein, a FZD protein and LRP5 or LRP6. Interacts directly in the complex with LRP6. Interacts with PORCN. Interacts with glypican GPC3. Interacts with PKD1 (via extracellular domain). Interacts with FZD5. In terms of processing, proteolytic processing by TIKI1 and TIKI2 promotes oxidation and formation of large disulfide-bond oligomers, leading to inactivation of WNT3A. Post-translationally, disulfide bonds have critical and distinct roles in secretion and activity. Loss of each conserved cysteine in WNT3A results in high molecular weight oxidized Wnt oligomers, which are formed through inter-Wnt disulfide bonding. Palmitoleoylation by PORCN is required for efficient binding to frizzled receptors. Palmitoleoylation is required for proper trafficking to cell surface, vacuolar acidification is critical to release palmitoleoylated WNT3A from WLS in secretory vesicles. Depalmitoleoylated by NOTUM, leading to inhibit Wnt signaling pathway, possibly by promoting disulfide bond formation and oligomerization. As to expression, dorsal portion of the neural tube (developing roof plate), and mesenchyme tissue surrounding the umbilical veins.

It localises to the secreted. Its subcellular location is the extracellular space. It is found in the extracellular matrix. Ligand for members of the frizzled family of seven transmembrane receptors. Functions in the canonical Wnt signaling pathway that results in activation of transcription factors of the TCF/LEF family. Required for normal embryonic mesoderm development and formation of caudal somites. Required for normal morphogenesis of the developing neural tube. Mediates self-renewal of the stem cells at the bottom on intestinal crypts (in vitro). This is Protein Wnt-3a (Wnt3a) from Mus musculus (Mouse).